A 1117-amino-acid chain; its full sequence is Reverse gyrase (1117 aa).

Residues 3–42 form an RG N-terminal-type zinc finger; the sequence is LATGAKYYHSCINCGGINTDTRNEKGLPCEVCLPFEDGDV. Zn(2+) contacts are provided by C13, C16, C31, and C34. ATP contacts are provided by residues Q84 and 101–108; that span reads APTGVGKT. The Helicase ATP-binding domain maps to 88–284; it reads AKRLLLSKSF…LFRELLGFEI (197 aa). The DEAD box motif lies at 206-209; sequence DDVD. The topoisomerase I stretch occupies residues 551 to 1117; it reads KDMKSRMIIV…EELNEILIKN (567 aa). The Toprim domain maps to 555 to 712; it reads SRMIIVESPT…NVQRIEMHEI (158 aa). Residue E561 participates in Mg(2+) binding. Residues 631–658 form an RG C-terminal-type zinc finger; sequence IKRCSSCGAQFTDELPRCPYCNSDKIDD. Residues C634, C637, C648, and C651 each coordinate Zn(2+). Mg(2+) is bound at residue D681. Residues 728 to 1114 form the Topo IA-type catalytic domain; it reads DVNLVKSQIV…NLYEELNEIL (387 aa). Catalysis depends on Y864, which acts as the O-(5'-phospho-DNA)-tyrosine intermediate.

The protein in the N-terminal section; belongs to the DEAD box helicase family. DDVD subfamily. This sequence in the C-terminal section; belongs to the type IA topoisomerase family. In terms of assembly, monomer. The cofactor is Zn(2+). Mg(2+) serves as cofactor.

The protein localises to the cytoplasm. The catalysed reaction is ATP + H2O = ADP + phosphate + H(+). Modifies the topological state of DNA by introducing positive supercoils in an ATP-dependent process, increasing the linking number in steps of +1; also positively supercoils with dATP and ATP-gamma-S. With UTP or dTTP relaxes negatively supercoiled DNA, in the absence of any nucleotide partially relaxes negative supercoils. In the absence of nucleotide has a higher affinity for dsDNA with a single-stranded tail than dsDNA or ssDNA. Has an ATPase activity in the absence of DNA. Binds to single-stranded DNA, transiently cleaves and then rejoins the ends, introducing a positive supercoil in the process. The scissile phosphodiester is attacked by the catalytic tyrosine of the enzyme, resulting in the formation of a DNA-(5'-phosphotyrosyl)-enzyme intermediate. Probably involved in rewinding DNA strands in regions of the chromosome that have opened up to allow replication, transcription, DNA repair and/or for DNA protection. In Caldanaerobacter subterraneus subsp. tengcongensis (strain DSM 15242 / JCM 11007 / NBRC 100824 / MB4) (Thermoanaerobacter tengcongensis), this protein is Reverse gyrase.